The sequence spans 221 residues: UPF0758 protein YicR (221 aa).

Residues 99–221 form the MPN domain; that stretch reads ALLSPEMTRE…YVSFAERGWI (123 aa). The Zn(2+) site is built by histidine 170, histidine 172, and aspartate 183. Residues 170 to 183 carry the JAMM motif motif; it reads HNHPSGCAEPSKAD.

Belongs to the UPF0758 family. YicR subfamily.

The sequence is that of UPF0758 protein YicR from Salmonella paratyphi A (strain ATCC 9150 / SARB42).